The sequence spans 270 residues: uncharacterized protein (270 aa).

Basic and acidic residues predominate over residues 22–31 (EAPQRTEASR). The disordered stretch occupies residues 22–42 (EAPQRTEASRTHPSPFLALPG).

This is an uncharacterized protein from Homo sapiens (Human).